Reading from the N-terminus, the 1107-residue chain is Integrator complex subunit 6 homolog (1107 aa).

A VWFA domain is found at 2–195 (LITFVVDTSG…LPMEPAIAPM (194 aa)). Disordered stretches follow at residues 454–515 (RIIN…SGNL), 542–572 (DNETSENSELSQELSESSTTGSSGGGSSSNI), 629–801 (TLRD…VSSP), 818–861 (QISS…IVNN), and 946–1034 (VVRP…TTPN). Low complexity-rich tracts occupy residues 460–513 (QQQQ…SGSG) and 546–562 (SENSELSQELSESSTTG). Residues 629–639 (TLRDIDDDKKP) show a composition bias toward basic and acidic residues. Over residues 693 to 801 (PSLPTLNSLS…PIPSTTVSSP (109 aa)) the composition is skewed to low complexity. The segment covering 846–857 (SPPPPPPPPPLP) has biased composition (pro residues). The span at 956–975 (PLTIDTLTSSSSSSTIPTTT) shows a compositional bias: low complexity. The segment covering 976–996 (NGSLSTHDTPNTSPTLSSINY) has biased composition (polar residues). Low complexity predominate over residues 997–1034 (NNNNNNNNNNNNNNNNNNNNNNNNNNRKNSIITTTTPN). The region spanning 1041-1103 (IKFVHKEIRR…SLISKLIGYI (63 aa)) is the MIF4G domain.

This sequence belongs to the Integrator subunit 6 family. As to quaternary structure, component of the Integrator complex. The core complex associates with protein phosphatase 2A subunits, to form the Integrator-PP2A (INTAC) complex.

It is found in the nucleus. It localises to the chromosome. Functionally, component of the integrator complex, a multiprotein complex that terminates RNA polymerase II (Pol II) transcription in the promoter-proximal region of genes. The integrator complex provides a quality checkpoint during transcription elongation by driving premature transcription termination of transcripts that are unfavorably configured for transcriptional elongation: the complex terminates transcription by (1) catalyzing dephosphorylation of the C-terminal domain (CTD) of Pol II subunit polr2a, (2) degrading the exiting nascent RNA transcript via endonuclease activity and (3) promoting the release of Pol II from bound DNA. The integrator complex is also involved in terminating the synthesis of non-coding Pol II transcripts, such as enhancer RNAs (eRNAs), small nuclear RNAs (snRNAs), telomerase RNAs and long non-coding RNAs (lncRNAs). Within the integrator complex, INTS6 acts as a molecular adapter that promotes assembly of protein phosphatase 2A (PP2A) subunits to the integrator core complex, promoting recruitment of PP2A to transcription pause-release checkpoint. This is Integrator complex subunit 6 homolog (ints6) from Dictyostelium discoideum (Social amoeba).